The chain runs to 361 residues: Peroxidase A (361 aa).

It belongs to the peroxidase family. In terms of processing, partially N-glycosylated.

The protein localises to the secreted. The enzyme catalyses 2 a phenolic donor + H2O2 = 2 a phenolic radical donor + 2 H2O. This Aloe vera (Aloe) protein is Peroxidase A.